A 113-amino-acid chain; its full sequence is Ribosome-associated factor Y (113 aa).

An N6-acetyllysine modification is found at lysine 66. The tract at residues 91–113 is disordered; the sequence is KGEARRAATSVKDANFVEEVEEE.

This sequence belongs to the HPF/YfiA ribosome-associated protein family. YfiA subfamily. Associates mainly with 70S ribosomes.

In terms of biological role, during stationary phase, prevents 70S dimer formation, probably in order to regulate translation efficiency during transition between the exponential and the stationary phases. In addition, during environmental stress such as cold shock or excessive cell density at stationary phase, stabilizes the 70S ribosome against dissociation, inhibits translation initiation and increase translation accuracy. When normal growth conditions are restored, is quickly released from the ribosome. This is Ribosome-associated factor Y from Escherichia coli O157:H7.